Here is a 180-residue protein sequence, read N- to C-terminus: ATP synthase subunit delta (180 aa).

It belongs to the ATPase delta chain family. As to quaternary structure, F-type ATPases have 2 components, F(1) - the catalytic core - and F(0) - the membrane proton channel. F(1) has five subunits: alpha(3), beta(3), gamma(1), delta(1), epsilon(1). F(0) has three main subunits: a(1), b(2) and c(10-14). The alpha and beta chains form an alternating ring which encloses part of the gamma chain. F(1) is attached to F(0) by a central stalk formed by the gamma and epsilon chains, while a peripheral stalk is formed by the delta and b chains.

It is found in the cell membrane. Functionally, f(1)F(0) ATP synthase produces ATP from ADP in the presence of a proton or sodium gradient. F-type ATPases consist of two structural domains, F(1) containing the extramembraneous catalytic core and F(0) containing the membrane proton channel, linked together by a central stalk and a peripheral stalk. During catalysis, ATP synthesis in the catalytic domain of F(1) is coupled via a rotary mechanism of the central stalk subunits to proton translocation. This protein is part of the stalk that links CF(0) to CF(1). It either transmits conformational changes from CF(0) to CF(1) or is implicated in proton conduction. The sequence is that of ATP synthase subunit delta from Leuconostoc citreum (strain KM20).